Here is a 318-residue protein sequence, read N- to C-terminus: Taste receptor type 2 member 117 (318 aa).

Residues Met-1–Leu-16 lie on the Extracellular side of the membrane. Residues Thr-17–Val-37 form a helical membrane-spanning segment. Topologically, residues His-38–Gln-53 are cytoplasmic. A helical transmembrane segment spans residues Ile-54–Val-74. At Ile-75–Asn-93 the chain is on the extracellular side. The helical transmembrane segment at Leu-94–Phe-114 threads the bilayer. The Cytoplasmic segment spans residues Leu-115–Lys-134. Residues Val-135–Asn-155 form a helical membrane-spanning segment. Topologically, residues Leu-156–His-189 are extracellular. The N-linked (GlcNAc...) asparagine glycan is linked to Asn-168. A helical transmembrane segment spans residues Ile-190–Ser-210. Over Leu-211–Gln-238 the chain is Cytoplasmic. Residues Thr-239–Trp-259 traverse the membrane as a helical segment. The Extracellular segment spans residues Lys-260–Leu-268. A helical membrane pass occupies residues Phe-269–Ile-289. The Cytoplasmic segment spans residues Leu-290 to Leu-318.

Belongs to the G-protein coupled receptor T2R family.

The protein localises to the membrane. In terms of biological role, putative taste receptor which may play a role in the perception of bitterness. The sequence is that of Taste receptor type 2 member 117 from Rattus norvegicus (Rat).